The sequence spans 650 residues: Peroxisomal biogenesis factor 8 (650 aa).

Residues 648–650 (AKL) carry the Microbody targeting signal motif.

The protein resides in the peroxisome matrix. Its function is as follows. Essential for peroxisome biogenesis. May play a role in triggering the protein import competence of individual peroxisomes. It may interact with PEX10. This is Peroxisomal biogenesis factor 8 (PEX8) from Pichia angusta (Yeast).